A 195-amino-acid polypeptide reads, in one-letter code: Pyruvoyl-dependent arginine decarboxylase AaxB (195 aa).

S53 is subject to Pyruvic acid (Ser).

It belongs to the pyruvoyl-dependent arginine decarboxylase family. In terms of assembly, trimer of an alpha-beta dimer. Requires pyruvate as cofactor.

The protein resides in the cytoplasm. It catalyses the reaction L-arginine + H(+) = agmatine + CO2. Inhibited by argininamide. Its function is as follows. Part of the AaxABC system, catalyzes the decarboxylation of L-arginine. The arginine uptake by the bacterium in the macrophage may be a virulence factor against the host innate immune response. The chain is Pyruvoyl-dependent arginine decarboxylase AaxB (aaxB) from Chlamydia pneumoniae (Chlamydophila pneumoniae).